We begin with the raw amino-acid sequence, 252 residues long: 5-oxoprolinase subunit A (252 aa).

It belongs to the LamB/PxpA family. Forms a complex composed of PxpA, PxpB and PxpC.

It carries out the reaction 5-oxo-L-proline + ATP + 2 H2O = L-glutamate + ADP + phosphate + H(+). Catalyzes the cleavage of 5-oxoproline to form L-glutamate coupled to the hydrolysis of ATP to ADP and inorganic phosphate. In Mycobacterium avium (strain 104), this protein is 5-oxoprolinase subunit A.